A 344-amino-acid polypeptide reads, in one-letter code: HTH-type transcriptional regulator MalR (344 aa).

Residues 1-54 enclose the HTH lacI-type domain; that stretch reads MTTRLADIAAQAGVSEATVSRVLNGKPGVAATTRQSVLAALDVLGYERPVRLRQ. The segment at residues 5–24 is a DNA-binding region (H-T-H motif); the sequence is LADIAAQAGVSEATVSRVLN.

In terms of biological role, transcriptional repressor of the maltosaccharide utilization operon malEFG. This is HTH-type transcriptional regulator MalR (malR) from Streptomyces coelicolor (strain ATCC BAA-471 / A3(2) / M145).